Reading from the N-terminus, the 105-residue chain is QPKSSPSVTLFPPSSEELETNKATLVCTITDFYPGVVTVDWKVDGTPVTQGMETTQPSKQSNNKYMASSYLTLTARAWERHSSYSCQVTHEGHTVEKSLSRADCS.

An Ig-like domain is found at 6-100 (PSVTLFPPSS…EGHTVEKSLS (95 aa)). Cysteine 27 and cysteine 86 form a disulfide bridge.

The polypeptide is Ig lambda-1 chain C region (Mus musculus (Mouse)).